Consider the following 484-residue polypeptide: MANKIRVRYAPSPTGLLHIGNARTALFNYLYARHHGGDFVIRIEDTDRKRHVEDGERSQLENLRWLGMDWDESPETHENYRQSERLELYQRYIDQLLAEGKAYKSYVTEEELAAERERQELAGETPRYINEFIGMSETEKEAYIAEREASGIIPTVRLAVNESGIYKWTDMVKGDIEFEGSNIGGDWVIQKKDGYPTYNFAVVIDDHDMQISHVIRGDDHIANTPKQLMVYEALGWEAPQFGHMTLIINSETGKKLSKRDTNTLQFIEDYRKKGYMSEAVFNFIALLGWNPGGEEEIFSREQLINLFDENRLSKSPAAFDQKKMDWMSNDYLKNADFESVFALCKPFLEEAGRLTDKAEKLVELYKPQLKSADEIVPLTDLFFADFPELTEAEKEVMAAETVPTVLSAFKEKLVSLSDEEFTRDTIFPQIKAVQKETGIKGKNLFMPIRIAVSGEMHGPELPDTIYLLGKEKSVQHIDNMLAKL.

The 'HIGH' region signature appears at 11–21; that stretch reads PSPTGLLHIGN. The 'KMSKS' region signature appears at 255–259; the sequence is KLSKR. Lys258 contributes to the ATP binding site.

This sequence belongs to the class-I aminoacyl-tRNA synthetase family. Glutamate--tRNA ligase type 1 subfamily. As to quaternary structure, monomer.

It is found in the cytoplasm. It carries out the reaction tRNA(Glu) + L-glutamate + ATP = L-glutamyl-tRNA(Glu) + AMP + diphosphate. Catalyzes the attachment of glutamate to tRNA(Glu) in a two-step reaction: glutamate is first activated by ATP to form Glu-AMP and then transferred to the acceptor end of tRNA(Glu). The chain is Glutamate--tRNA ligase from Streptococcus agalactiae serotype III (strain NEM316).